A 198-amino-acid chain; its full sequence is Endonuclease V (198 aa).

Mg(2+) is bound by residues D38 and D101.

It belongs to the endonuclease V family. Mg(2+) serves as cofactor.

Its subcellular location is the cytoplasm. It catalyses the reaction Endonucleolytic cleavage at apurinic or apyrimidinic sites to products with a 5'-phosphate.. In terms of biological role, DNA repair enzyme involved in the repair of deaminated bases. Selectively cleaves double-stranded DNA at the second phosphodiester bond 3' to a deoxyinosine leaving behind the intact lesion on the nicked DNA. This Saccharolobus islandicus (strain Y.N.15.51 / Yellowstone #2) (Sulfolobus islandicus) protein is Endonuclease V.